A 255-amino-acid polypeptide reads, in one-letter code: Putative deoxyribonuclease tatdn3-B (255 aa).

Residues histidine 11, histidine 13, glutamate 106, histidine 129, histidine 152, and aspartate 199 each contribute to the Zn(2+) site.

Belongs to the metallo-dependent hydrolases superfamily. TatD-type hydrolase family. Mn(2+) serves as cofactor. The cofactor is Ca(2+). Mg(2+) is required as a cofactor. Requires Zn(2+) as cofactor.

Its subcellular location is the nucleus. Its activity is regulated as follows. The 3'-exonuclease activity is sensitive to the metal ion present in the active site, whereas the AP endodeoxyribonuclease activity is observed in a variety of divalent metal cofactors. 3'-exoxonuclease activity is suppressed in the presence of Ca(2+), Zn(2+) and Ni(2+). Its function is as follows. Exhibits 3'-exonuclease activities and apurinic/apyrimidinic (AP) endonuclease (in vitro). Show preferential AP endonuclease activity on double-stranded DNA substrates and 3'- exonuclease activity on single-stranded DNA. The sequence is that of Putative deoxyribonuclease tatdn3-B (tatdn3-b) from Xenopus laevis (African clawed frog).